The primary structure comprises 404 residues: Type I restriction enzyme EcoR124I/EcoR124II specificity subunit (404 aa).

The tract at residues 1–153 is target-recognition domain 1; the sequence is MSEMSYLEKL…PIPCPDNPEK (153 aa). The conserved region 1 stretch occupies residues 154 to 199; it reads SLAIQSEIVRILDKFTALTAELTAELNMRKKQYNYYRDQLLSFKEG. Residues 200–349 are target-recognition domain 2; that stretch reads EVEWKTLGEI…KLFSFKIPVP (150 aa). The interval 350-404 is conserved region 2; that stretch reads NINEQQRIVEILDKFDTLTNSITEGLPREIELRQKQYEYYRDLLFSFPKPETVSN.

Belongs to the type-I restriction system S methylase family. The type I restriction/modification system is composed of three polypeptides R, M and S; the restriction enzyme has stoichiometry R(2)M(2)S(1) while the methyltransferase is M(2)S(1). There is an equilibrium between R(2)M(2)S(1) and R(1)M(2)S(1); the latter is methylation and translocation proficient but restriction deficient. In terms of assembly, (Microbial infection) Holoenenzyme interacts with Escherichia phage T7 protein Ocr; this interaction leads to the inhibition of the restriction activity, but may still allow methylation and translocation.

The specificity (S) subunit of a type I restriction enzyme; this subunit dictates DNA sequence specificity. The presence or absence of a 4-residue repeat changes the sequence specificity; a third copy of TAEL inserted at position 179-180 changes the recognition site from 5'-GAAN(6)RTCG-3' (for EcoR124I) to 5'-GAAN(7)RTCG-3' (for EcoR124II). The M and S subunits together form a methyltransferase (MTase) that methylates A-3 on the top and bottom strand of the sequence 5'-GAAN(7)RTCG-3'. In the presence of the R subunit the complex can also act as an endonuclease, binding to the same target sequence but cutting the DNA some distance from this site. Whether the DNA is cut or modified depends on the methylation state of the target sequence. When the target site is unmodified, the DNA is cut. When the target site is hemimethylated, the complex acts as a maintenance MTase modifying the DNA so that both strands become methylated. After locating a non-methylated recognition site, the enzyme complex serves as a molecular motor that translocates DNA in an ATP-dependent manner until a collision occurs that triggers cleavage. The R(1)M(2)S(1) complex translocates an average of 555 bp/second on nicked DNA; the R(2)M(2)S(1) complex translocates at double that speed. The 2 R subunit motors are independent and track along the helical pitch of the DNA, inducing positive supercoiling ahead of themselves. The protein is Type I restriction enzyme EcoR124I/EcoR124II specificity subunit (hsdS) of Escherichia coli.